The primary structure comprises 534 residues: 26S proteasome non-ATPase regulatory subunit 3 (534 aa).

Residues 1 to 16 (MKQEGSARRRGADKAK) are compositionally biased toward basic and acidic residues. Residues 1–69 (MKQEGSARRR…AEHSQRELDT (69 aa)) form a disordered region. Residues 17-32 (PPPGGGEQEPPPPPAP) show a composition bias toward pro residues. Residue Lys-38 forms a Glycyl lysine isopeptide (Lys-Gly) (interchain with G-Cter in SUMO1); alternate linkage. Lys-38 participates in a covalent cross-link: Glycyl lysine isopeptide (Lys-Gly) (interchain with G-Cter in SUMO2); alternate. The 180-residue stretch at 286 to 465 (ARYLYYTGRI…GYVQSKEMID (180 aa)) folds into the PCI domain. Ser-418 and Ser-430 each carry phosphoserine. Positions 500 to 534 (SYNKDLESAEERREREQQDLEFAKEMAEDDDDSFP) are disordered. The span at 501–525 (YNKDLESAEERREREQQDLEFAKEM) shows a compositional bias: basic and acidic residues.

The protein belongs to the proteasome subunit S3 family. Component of the 19S proteasome regulatory particle complex. The 26S proteasome consists of a 20S core particle (CP) and two 19S regulatory subunits (RP). The regulatory particle is made of a lid composed of 9 subunits including PSMD3, a base containing 6 ATPases and few additional components. Interacts with UBQLN1 (via ubiquitin-like domain). Interacts with ERCC6.

In terms of biological role, component of the 26S proteasome, a multiprotein complex involved in the ATP-dependent degradation of ubiquitinated proteins. This complex plays a key role in the maintenance of protein homeostasis by removing misfolded or damaged proteins, which could impair cellular functions, and by removing proteins whose functions are no longer required. Therefore, the proteasome participates in numerous cellular processes, including cell cycle progression, apoptosis, or DNA damage repair. The chain is 26S proteasome non-ATPase regulatory subunit 3 (PSMD3) from Homo sapiens (Human).